The following is a 155-amino-acid chain: Peptidyl-prolyl cis-trans isomerase ppi1 (155 aa).

A PPIase cyclophilin-type domain is found at 1–154; it reads MANVELQTSL…EPLKIIKAVA (154 aa).

It belongs to the cyclophilin-type PPIase family. PPIL1 subfamily. Interacts with cwf13/snw1.

It catalyses the reaction [protein]-peptidylproline (omega=180) = [protein]-peptidylproline (omega=0). Its function is as follows. PPIases accelerate the folding of proteins. It catalyzes the cis-trans isomerization of proline imidic peptide bonds in oligopeptides. This is Peptidyl-prolyl cis-trans isomerase ppi1 (ppi1) from Schizosaccharomyces pombe (strain 972 / ATCC 24843) (Fission yeast).